The primary structure comprises 171 residues: Putative MucR family transcriptional regulatory protein y4pD (171 aa).

This sequence belongs to the ros/MucR family.

This Sinorhizobium fredii (strain NBRC 101917 / NGR234) protein is Putative MucR family transcriptional regulatory protein y4pD.